Here is a 268-residue protein sequence, read N- to C-terminus: D-alanyl-D-alanine carboxypeptidase (268 aa).

The chain crosses the membrane as a helical span at residues 25 to 47 (AFLWAFIISFTVCTLFLGWRLVS). Substrate contacts are provided by residues Gln-151, 179–181 (WVA), and Ser-186. Residues His-188 and Asp-195 each coordinate Zn(2+). Glu-238 (proton donor/acceptor) is an active-site residue. His-241 is a Zn(2+) binding site.

Belongs to the peptidase M15B family. In terms of assembly, monomer. The cofactor is Zn(2+).

It localises to the cell membrane. With respect to regulation, carboxypeptidase activity is insensitive to beta-lactams since it is not affected by penicillin G or ampicillin and is inhibited only by very high concentrations of cefalotin and cefoxitin. Functionally, carboxypeptidase that cleaves the C-terminal D-alanine residue from the peptidoglycan-derived pentapeptide L-Ala-gamma-D-Glu-L-Lys-D-Ala-D-Ala in vitro. Therefore, should contribute in vivo to the hydrolysis of the D-alanyl-D-alanine-containing peptidoglycan precursors. May increase the level of glycopeptide antibiotics resistance by decreasing the availability of D-Ala-D-Ala termini from the cell surface, which constitute the antibiotic target residues. The protein is D-alanyl-D-alanine carboxypeptidase of Enterococcus faecalis (strain ATCC 700802 / V583).